Consider the following 482-residue polypeptide: tRNA sulfurtransferase (482 aa).

The THUMP domain occupies 61 to 165; sequence DLVRDALTRI…DDRLLLVRGR (105 aa). ATP-binding positions include 183–184, K265, G287, and Q296; that span reads LI. A disulfide bridge connects residues C344 and C456. The 79-residue stretch at 404–482 folds into the Rhodanese domain; sequence LAEGDVVLDI…GYDNVRVYRP (79 aa). Residue C456 is the Cysteine persulfide intermediate of the active site.

It belongs to the ThiI family.

Its subcellular location is the cytoplasm. It carries out the reaction [ThiI sulfur-carrier protein]-S-sulfanyl-L-cysteine + a uridine in tRNA + 2 reduced [2Fe-2S]-[ferredoxin] + ATP + H(+) = [ThiI sulfur-carrier protein]-L-cysteine + a 4-thiouridine in tRNA + 2 oxidized [2Fe-2S]-[ferredoxin] + AMP + diphosphate. The catalysed reaction is [ThiS sulfur-carrier protein]-C-terminal Gly-Gly-AMP + S-sulfanyl-L-cysteinyl-[cysteine desulfurase] + AH2 = [ThiS sulfur-carrier protein]-C-terminal-Gly-aminoethanethioate + L-cysteinyl-[cysteine desulfurase] + A + AMP + 2 H(+). It participates in cofactor biosynthesis; thiamine diphosphate biosynthesis. Its function is as follows. Catalyzes the ATP-dependent transfer of a sulfur to tRNA to produce 4-thiouridine in position 8 of tRNAs, which functions as a near-UV photosensor. Also catalyzes the transfer of sulfur to the sulfur carrier protein ThiS, forming ThiS-thiocarboxylate. This is a step in the synthesis of thiazole, in the thiamine biosynthesis pathway. The sulfur is donated as persulfide by IscS. This is tRNA sulfurtransferase from Edwardsiella ictaluri (strain 93-146).